We begin with the raw amino-acid sequence, 297 residues long: Virulence genes transcriptional activator (297 aa).

Positions Met-1 to Thr-61 constitute an HTH lysR-type domain. Positions Phe-21–Ser-40 form a DNA-binding region, H-T-H motif.

It belongs to the LysR transcriptional regulatory family.

Its subcellular location is the cytoplasm. Its function is as follows. Positive regulator for the plasmid-encoded virulence factors SpvA, SpvB, and SpvC. The chain is Virulence genes transcriptional activator (mkaC) from Salmonella typhimurium (strain LT2 / SGSC1412 / ATCC 700720).